A 279-amino-acid polypeptide reads, in one-letter code: Small ribosomal subunit protein uS2 (279 aa).

The segment at 232–260 (KVDMEAAGENAPKGAGKKKNTKARMDKAE) is disordered.

This sequence belongs to the universal ribosomal protein uS2 family.

The sequence is that of Small ribosomal subunit protein uS2 from Phocaeicola vulgatus (strain ATCC 8482 / DSM 1447 / JCM 5826 / CCUG 4940 / NBRC 14291 / NCTC 11154) (Bacteroides vulgatus).